The chain runs to 311 residues: Small ribosomal subunit protein uS3 (311 aa).

The region spanning 17–86 (MDEYFAEQLN…NPQIDAQEVK (70 aa)) is the KH type-2 domain. Residues 190-267 (PDSYTTTEPS…EPQAEVAEDL (78 aa)) are disordered. Low complexity predominate over residues 194–204 (TTTEPSEPVTE). The segment covering 205–231 (PVEKPAEKPAAKPAEKPVEAPKKESAA) has biased composition (basic and acidic residues). Residues 232–247 (KPKTPAVAPEKPVETA) show a composition bias toward low complexity. The span at 248-267 (EVAEPEEAEEEPQAEVAEDL) shows a compositional bias: acidic residues.

This sequence belongs to the universal ribosomal protein uS3 family. In terms of assembly, part of the 30S ribosomal subunit.

Its function is as follows. Binds the lower part of the 30S subunit head. This chain is Small ribosomal subunit protein uS3, found in Methanosarcina barkeri (strain Fusaro / DSM 804).